We begin with the raw amino-acid sequence, 85 residues long: Large ribosomal subunit protein bL31B (85 aa).

The protein belongs to the bacterial ribosomal protein bL31 family. Type B subfamily. As to quaternary structure, part of the 50S ribosomal subunit.

This Bifidobacterium longum subsp. infantis (strain ATCC 15697 / DSM 20088 / JCM 1222 / NCTC 11817 / S12) protein is Large ribosomal subunit protein bL31B.